A 341-amino-acid chain; its full sequence is Glycerol-3-phosphate dehydrogenase [NAD(P)+] 1 (341 aa).

S17, W18, R37, and K112 together coordinate NADPH. The sn-glycerol 3-phosphate site is built by K112 and G140. A144 lines the NADPH pocket. Sn-glycerol 3-phosphate is bound by residues K195, D248, S258, R259, and N260. The Proton acceptor role is filled by K195. NADPH is bound at residue R259. Positions 283 and 285 each coordinate NADPH.

It belongs to the NAD-dependent glycerol-3-phosphate dehydrogenase family.

Its subcellular location is the cytoplasm. It carries out the reaction sn-glycerol 3-phosphate + NAD(+) = dihydroxyacetone phosphate + NADH + H(+). It catalyses the reaction sn-glycerol 3-phosphate + NADP(+) = dihydroxyacetone phosphate + NADPH + H(+). Its pathway is membrane lipid metabolism; glycerophospholipid metabolism. Catalyzes the reduction of the glycolytic intermediate dihydroxyacetone phosphate (DHAP) to sn-glycerol 3-phosphate (G3P), the key precursor for phospholipid synthesis. This is Glycerol-3-phosphate dehydrogenase [NAD(P)+] 1 from Mycobacterium bovis (strain ATCC BAA-935 / AF2122/97).